Here is a 326-residue protein sequence, read N- to C-terminus: Beta-ketoacyl-[acyl-carrier-protein] synthase III (326 aa).

Active-site residues include cysteine 120 and histidine 253. The segment at 254-258 (QANIR) is ACP-binding. Asparagine 283 is an active-site residue.

This sequence belongs to the thiolase-like superfamily. FabH family. Homodimer.

The protein resides in the cytoplasm. The enzyme catalyses malonyl-[ACP] + acetyl-CoA + H(+) = 3-oxobutanoyl-[ACP] + CO2 + CoA. Its pathway is lipid metabolism; fatty acid biosynthesis. Catalyzes the condensation reaction of fatty acid synthesis by the addition to an acyl acceptor of two carbons from malonyl-ACP. Catalyzes the first condensation reaction which initiates fatty acid synthesis and may therefore play a role in governing the total rate of fatty acid production. Possesses both acetoacetyl-ACP synthase and acetyl transacylase activities. Its substrate specificity determines the biosynthesis of branched-chain and/or straight-chain of fatty acids. The chain is Beta-ketoacyl-[acyl-carrier-protein] synthase III from Cupriavidus taiwanensis (strain DSM 17343 / BCRC 17206 / CCUG 44338 / CIP 107171 / LMG 19424 / R1) (Ralstonia taiwanensis (strain LMG 19424)).